The following is a 60-amino-acid chain: LKCNKLIPPFWKTCPKGKNLCYKMYMVSTLTVPVKRGCIDVCPKNSALVKYVCCNTNKCN.

4 cysteine pairs are disulfide-bonded: cysteine 3-cysteine 21, cysteine 14-cysteine 38, cysteine 42-cysteine 53, and cysteine 54-cysteine 59.

This sequence belongs to the three-finger toxin family. Short-chain subfamily. Type IA cytotoxin sub-subfamily. As to quaternary structure, monomer in solution; Homodimer and oligomer in the presence of negatively charged lipids forming a pore with a size ranging between 20 and 30 Angstroms. As to expression, expressed by the venom gland.

It is found in the secreted. It localises to the target cell membrane. Shows cytolytic activity on many different cells by forming pore in lipid membranes. In vivo, increases heart rate or kills the animal by cardiac arrest. In addition, it binds to heparin with high affinity, interacts with Kv channel-interacting protein 1 (KCNIP1) in a calcium-independent manner, and binds to integrin alpha-V/beta-3 (ITGAV/ITGB3) with moderate affinity. The sequence is that of Cytotoxin 4 from Naja annulifera (Banded Egyptian cobra).